The chain runs to 152 residues: Em-like protein GEA1 (152 aa).

Composition is skewed to basic and acidic residues over residues 1-17 (MASKQLSREELDEKAKQ) and 32-63 (EAQEHLAEGRSKGGQTRKEQLGHEGYQEIGHK). Positions 1 to 63 (MASKQLSREE…HEGYQEIGHK (63 aa)) are disordered. 4 tandem repeats follow at residues 44-63 (GGQTRKEQLGHEGYQEIGHK), 64-83 (GGEARKEQLGHEGYQEMGHK), 84-103 (GGEARKEQLGHEGYQEMGHK), and 104-123 (GGEARKEQLGHEGYKEMGRK). Positions 44–123 (GGQTRKEQLG…HEGYKEMGRK (80 aa)) are 4 X 20 AA tandem repeats. The disordered stretch occupies residues 116–152 (GYKEMGRKGGLSTMEKSGGERAEEEGIEIDESKFTNK).

The protein belongs to the small hydrophilic plant seed protein family. In terms of tissue distribution, in seeds only. Specifically located to vascular bundles in the cotyledon and axis of the dry seed. Also found in the epiderm and outer layers of the cortex in the embryo axis.

In terms of biological role, it is thought to provide protection for the cytoplasm during the desiccation stage of embryo development. The sequence is that of Em-like protein GEA1 (EM1) from Arabidopsis thaliana (Mouse-ear cress).